We begin with the raw amino-acid sequence, 430 residues long: Gamma-glutamyl phosphate reductase (430 aa).

Belongs to the gamma-glutamyl phosphate reductase family.

The protein resides in the cytoplasm. The catalysed reaction is L-glutamate 5-semialdehyde + phosphate + NADP(+) = L-glutamyl 5-phosphate + NADPH + H(+). It participates in amino-acid biosynthesis; L-proline biosynthesis; L-glutamate 5-semialdehyde from L-glutamate: step 2/2. Its function is as follows. Catalyzes the NADPH-dependent reduction of L-glutamate 5-phosphate into L-glutamate 5-semialdehyde and phosphate. The product spontaneously undergoes cyclization to form 1-pyrroline-5-carboxylate. This chain is Gamma-glutamyl phosphate reductase, found in Rhodopseudomonas palustris (strain ATCC BAA-98 / CGA009).